Here is a 311-residue protein sequence, read N- to C-terminus: Taste receptor type 2 member 40 (311 aa).

At Met-1 to Cys-9 the chain is on the extracellular side. The helical transmembrane segment at Leu-10–Val-30 threads the bilayer. Topologically, residues Ser-31–Arg-55 are cytoplasmic. A helical transmembrane segment spans residues Phe-56–Tyr-76. Over Tyr-77–Thr-87 the chain is Extracellular. The chain crosses the membrane as a helical span at residues Val-88 to Cys-108. Topologically, residues Val-109–Ser-128 are cytoplasmic. A helical transmembrane segment spans residues Leu-129–Phe-149. Over Trp-150 to Asn-178 the chain is Extracellular. A helical transmembrane segment spans residues Leu-179–Phe-199. At Ser-200 to Lys-235 the chain is on the cytoplasmic side. The helical transmembrane segment at Thr-236 to Ser-256 threads the bilayer. Over Asp-257–Glu-266 the chain is Extracellular. A helical membrane pass occupies residues Ala-267–Ser-287. Over Asn-288–Ser-311 the chain is Cytoplasmic.

The protein belongs to the G-protein coupled receptor T2R family. As to expression, expressed in the oral cavity, as well as in the gastrointestinal tract, including in the upper palate, tongue, proventriculus, ventriculus, duodenum, jejunum, ileum, cecum and colon.

It localises to the cell membrane. Functionally, bitter taste receptor. Binds quinine, dextromethorphan, diphenhydramine, diphenidol, chlorpheniramine, diphenidol, chloramphenicol, chloroquine and coumarin, this latter being a weak agonist, as well as epiquinidine, ethylhydrocupreine and quinidine. This Gallus gallus (Chicken) protein is Taste receptor type 2 member 40 (TAS2R40).